A 97-amino-acid polypeptide reads, in one-letter code: Large ribosomal subunit protein bL25 (97 aa).

Belongs to the bacterial ribosomal protein bL25 family. In terms of assembly, part of the 50S ribosomal subunit; part of the 5S rRNA/L5/L18/L25 subcomplex. Contacts the 5S rRNA. Binds to the 5S rRNA independently of L5 and L18.

Its function is as follows. This is one of the proteins that binds to the 5S RNA in the ribosome where it forms part of the central protuberance. The polypeptide is Large ribosomal subunit protein bL25 (Buchnera aphidicola subsp. Baizongia pistaciae (strain Bp)).